The chain runs to 606 residues: NADH-ubiquinone oxidoreductase chain 5 (606 aa).

Transmembrane regions (helical) follow at residues 4–24 (FPSL…TTTI), 38–58 (NIIS…IHSG), 87–107 (MIFV…SMWY), 114–134 (ITQF…LVTA), 140–160 (LFIG…WWYG), 171–191 (AILY…WFLF), 213–233 (LMGL…HPWL), 241–261 (TPVS…FLLI), 273–293 (VQTF…ICAL), 301–320 (IIAF…IGIN), 325–347 (AFLH…GSII), 366–386 (MPFT…MPFL), 409–429 (LLIT…MIFF), 457–477 (LLIG…PTTI), 488–508 (LTAL…SLAT), and 583–603 (LIKL…LLLM).

This sequence belongs to the complex I subunit 5 family. In terms of assembly, core subunit of respiratory chain NADH dehydrogenase (Complex I) which is composed of 45 different subunits.

The protein resides in the mitochondrion inner membrane. The catalysed reaction is a ubiquinone + NADH + 5 H(+)(in) = a ubiquinol + NAD(+) + 4 H(+)(out). In terms of biological role, core subunit of the mitochondrial membrane respiratory chain NADH dehydrogenase (Complex I) which catalyzes electron transfer from NADH through the respiratory chain, using ubiquinone as an electron acceptor. Essential for the catalytic activity and assembly of complex I. This chain is NADH-ubiquinone oxidoreductase chain 5 (MT-ND5), found in Ceratotherium simum (White rhinoceros).